A 198-amino-acid chain; its full sequence is Dephospho-CoA kinase (198 aa).

Residues 3 to 198 (VVGLTGGIGA…HRRYSLLAAA (196 aa)) form the DPCK domain. Residue 11–16 (GAGKST) participates in ATP binding.

This sequence belongs to the CoaE family.

The protein resides in the cytoplasm. The catalysed reaction is 3'-dephospho-CoA + ATP = ADP + CoA + H(+). It functions in the pathway cofactor biosynthesis; coenzyme A biosynthesis; CoA from (R)-pantothenate: step 5/5. In terms of biological role, catalyzes the phosphorylation of the 3'-hydroxyl group of dephosphocoenzyme A to form coenzyme A. The protein is Dephospho-CoA kinase of Methylococcus capsulatus (strain ATCC 33009 / NCIMB 11132 / Bath).